Here is a 536-residue protein sequence, read N- to C-terminus: Chaperonin GroEL (536 aa).

Residues 29–32, 86–90, glycine 412, and aspartate 493 contribute to the ATP site; these read TLGP and DGTTT.

This sequence belongs to the chaperonin (HSP60) family. As to quaternary structure, forms a cylinder of 14 subunits composed of two heptameric rings stacked back-to-back. Interacts with the co-chaperonin GroES.

The protein localises to the cytoplasm. It carries out the reaction ATP + H2O + a folded polypeptide = ADP + phosphate + an unfolded polypeptide.. In terms of biological role, together with its co-chaperonin GroES, plays an essential role in assisting protein folding. The GroEL-GroES system forms a nano-cage that allows encapsulation of the non-native substrate proteins and provides a physical environment optimized to promote and accelerate protein folding. The chain is Chaperonin GroEL from Aster yellows witches'-broom phytoplasma (strain AYWB).